Here is a 177-residue protein sequence, read N- to C-terminus: Large ribosomal subunit protein uL10 (177 aa).

Belongs to the universal ribosomal protein uL10 family. Part of the ribosomal stalk of the 50S ribosomal subunit. The N-terminus interacts with L11 and the large rRNA to form the base of the stalk. The C-terminus forms an elongated spine to which L12 dimers bind in a sequential fashion forming a multimeric L10(L12)X complex.

In terms of biological role, forms part of the ribosomal stalk, playing a central role in the interaction of the ribosome with GTP-bound translation factors. This chain is Large ribosomal subunit protein uL10, found in Xanthomonas oryzae pv. oryzae (strain MAFF 311018).